A 456-amino-acid chain; its full sequence is Tyrosine phenol-lyase (456 aa).

The residue at position 257 (Lys-257) is an N6-(pyridoxal phosphate)lysine.

This sequence belongs to the beta-eliminating lyase family. In terms of assembly, homotetramer. It depends on pyridoxal 5'-phosphate as a cofactor. Post-translationally, contains L-DOPA (3',4'-dihydroxyphenylalanine).

The protein localises to the cytoplasm. The catalysed reaction is L-tyrosine + H2O = phenol + pyruvate + NH4(+). This chain is Tyrosine phenol-lyase (tpl), found in Enterobacter agglomerans (Erwinia herbicola).